We begin with the raw amino-acid sequence, 245 residues long: MNVTLLIPARYGSSRFPGKPLAPINGKPMIQHVYERAALAKGLKDIYVATDDERIKNAVEGFGGKVVMTGADAASGTDRIDDAITQLGLADDDLVINLQGDQPLIDPISIEQLVSLCERHPGEFDMATLGVEIRDEAQINDPNHVKMVFDNNFNALYFSRATIPFGRESSDYPVYKHLGIYAYTRKFIQTFAKLPLGRLEDLEKLEQLRALEYGYKIKVAISAFDSPEVDTPEDIRICEARLAVD.

This sequence belongs to the KdsB family.

The protein localises to the cytoplasm. The catalysed reaction is 8-amino-3,8-dideoxy-alpha-D-manno-octulosonate + CTP = CMP-8-amino-3,8-dideoxy-alpha-D-manno-oct-2-ulosonate + diphosphate. Its pathway is bacterial outer membrane biogenesis; lipopolysaccharide biosynthesis. In terms of biological role, activates KDO8N (a required 8-carbon sugar) for incorporation into bacterial lipopolysaccharide in the Shewanella genus. The sequence is that of 8-amino-3,8-dideoxy-manno-octulosonate cytidylyltransferase from Shewanella halifaxensis (strain HAW-EB4).